The following is a 154-amino-acid chain: Ribosomal RNA large subunit methyltransferase H (154 aa).

S-adenosyl-L-methionine contacts are provided by residues Gly-103 and 122–127; that span reads FSKLTF.

This sequence belongs to the RNA methyltransferase RlmH family. Homodimer.

The protein resides in the cytoplasm. It carries out the reaction pseudouridine(1915) in 23S rRNA + S-adenosyl-L-methionine = N(3)-methylpseudouridine(1915) in 23S rRNA + S-adenosyl-L-homocysteine + H(+). Specifically methylates the pseudouridine at position 1915 (m3Psi1915) in 23S rRNA. This chain is Ribosomal RNA large subunit methyltransferase H, found in Caldicellulosiruptor saccharolyticus (strain ATCC 43494 / DSM 8903 / Tp8T 6331).